Here is a 236-residue protein sequence, read N- to C-terminus: 2-C-methyl-D-erythritol 4-phosphate cytidylyltransferase (236 aa).

It belongs to the IspD/TarI cytidylyltransferase family. IspD subfamily. In terms of assembly, homodimer.

The enzyme catalyses 2-C-methyl-D-erythritol 4-phosphate + CTP + H(+) = 4-CDP-2-C-methyl-D-erythritol + diphosphate. Its pathway is isoprenoid biosynthesis; isopentenyl diphosphate biosynthesis via DXP pathway; isopentenyl diphosphate from 1-deoxy-D-xylulose 5-phosphate: step 2/6. Its function is as follows. Catalyzes the formation of 4-diphosphocytidyl-2-C-methyl-D-erythritol from CTP and 2-C-methyl-D-erythritol 4-phosphate (MEP). This chain is 2-C-methyl-D-erythritol 4-phosphate cytidylyltransferase, found in Escherichia fergusonii (strain ATCC 35469 / DSM 13698 / CCUG 18766 / IAM 14443 / JCM 21226 / LMG 7866 / NBRC 102419 / NCTC 12128 / CDC 0568-73).